The chain runs to 509 residues: Steroid 17-alpha-hydroxylase/17,20 lyase (509 aa).

Asn202 contacts substrate. Residue Cys442 participates in heme binding.

This sequence belongs to the cytochrome P450 family. Heme is required as a cofactor.

Its subcellular location is the endoplasmic reticulum membrane. It is found in the microsome membrane. It catalyses the reaction a C21-steroid + reduced [NADPH--hemoprotein reductase] + O2 = a 17alpha-hydroxy-C21-steroid + oxidized [NADPH--hemoprotein reductase] + H2O + H(+). The enzyme catalyses progesterone + reduced [NADPH--hemoprotein reductase] + O2 = 17alpha-hydroxyprogesterone + oxidized [NADPH--hemoprotein reductase] + H2O + H(+). The catalysed reaction is pregnenolone + reduced [NADPH--hemoprotein reductase] + O2 = 17alpha-hydroxypregnenolone + oxidized [NADPH--hemoprotein reductase] + H2O + H(+). It carries out the reaction 17alpha-hydroxyprogesterone + reduced [NADPH--hemoprotein reductase] + O2 = androst-4-ene-3,17-dione + acetate + oxidized [NADPH--hemoprotein reductase] + H2O + 2 H(+). It catalyses the reaction 17alpha-hydroxyprogesterone + reduced [NADPH--hemoprotein reductase] + O2 = 16alpha,17alpha-dihydroxyprogesterone + oxidized [NADPH--hemoprotein reductase] + H2O + H(+). The enzyme catalyses 16alpha,17alpha-dihydroxyprogesterone + reduced [NADPH--hemoprotein reductase] + O2 = 6beta,16alpha,17alpha-trihydroxyprogesterone + oxidized [NADPH--hemoprotein reductase] + H2O + H(+). The catalysed reaction is 17alpha-hydroxypregnenolone + reduced [NADPH--hemoprotein reductase] + O2 = 3beta-hydroxyandrost-5-en-17-one + acetate + oxidized [NADPH--hemoprotein reductase] + H2O + 2 H(+). It carries out the reaction 16alpha,17alpha-dihydroxypregnenolone + reduced [NADPH--hemoprotein reductase] + O2 = 3beta,16alpha-dihydroxy-androst-5-en-17-one + acetate + oxidized [NADPH--hemoprotein reductase] + H2O + 2 H(+). It catalyses the reaction 3beta-hydroxyandrost-5-en-17-one + reduced [NADPH--hemoprotein reductase] + O2 = 3beta,16alpha-dihydroxy-androst-5-en-17-one + oxidized [NADPH--hemoprotein reductase] + H2O + H(+). The enzyme catalyses androst-4-ene-3,17-dione + reduced [NADPH--hemoprotein reductase] + O2 = 16alpha-hydroxyandrost-4-ene-3,17-dione + oxidized [NADPH--hemoprotein reductase] + H2O + H(+). Its pathway is steroid hormone biosynthesis. It functions in the pathway steroid biosynthesis; glucocorticoid biosynthesis. With respect to regulation, regulated predominantly by intracellular cAMP levels. The 17,20-lyase activity is stimulated by cytochrome b5, which acts as an allosteric effector increasing the Vmax of the lyase activity. Its function is as follows. A cytochrome P450 monooxygenase involved in corticoid and androgen biosynthesis. Catalyzes 17-alpha hydroxylation of C21 steroids, which is common for both pathways. A second oxidative step, required only for androgen synthesis, involves an acyl-carbon cleavage. The 17-alpha hydroxy intermediates, as part of adrenal glucocorticoids biosynthesis pathway, are precursors of cortisol. Hydroxylates steroid hormones, pregnenolone and progesterone to form 17-alpha hydroxy metabolites, followed by the cleavage of the C17-C20 bond to form C19 steroids, dehydroepiandrosterone (DHEA) and androstenedione. Has 16-alpha hydroxylase activity. Catalyzes 16-alpha hydroxylation of 17-alpha hydroxy pregnenolone, followed by the cleavage of the C17-C20 bond to form 16-alpha-hydroxy DHEA. Also 16-alpha hydroxylates androgens, relevant for estriol synthesis. Mechanistically, uses molecular oxygen inserting one oxygen atom into a substrate, and reducing the second into a water molecule, with two electrons provided by NADPH via cytochrome P450 reductase (CPR; NADPH-ferrihemoprotein reductase). This Capra hircus (Goat) protein is Steroid 17-alpha-hydroxylase/17,20 lyase (CYP17A1).